Here is a 1382-residue protein sequence, read N- to C-terminus: Hepatocyte growth factor receptor (1382 aa).

A signal peptide spans 1–24; it reads MKAPAVLAPGILVLLFTLVQKSYG. The Extracellular segment spans residues 25 to 933; sequence ECREALVKSE…VIVQPDQNFT (909 aa). Positions 27–516 constitute a Sema domain; that stretch reads REALVKSEMN…TGKKITKIPL (490 aa). An N-linked (GlcNAc...) asparagine glycan is attached at N45. 4 cysteine pairs are disulfide-bonded: C95–C101, C98–C160, C133–C141, and C173–C176. Residue N106 is glycosylated (N-linked (GlcNAc...) asparagine). N-linked (GlcNAc...) asparagine glycans are attached at residues N203 and N359. Disulfide bonds link C299–C364 and C386–C398. N-linked (GlcNAc...) asparagine glycans are attached at residues N400 and N406. Disulfide bonds link C521–C539, C527–C562, C530–C546, and C542–C552. 3 consecutive IPT/TIG domains span residues 564 to 656, 658 to 740, and 743 to 837; these read PTIY…FSYV, PVIT…FSYQ, and PIVY…LIYV. T583 carries an O-linked (Man) threonine glycan. N-linked (GlcNAc...) asparagine glycans are attached at residues N608 and N636. 2 O-linked (Man) threonine glycosylation sites follow: T677 and T762. N786, N880, and N931 each carry an N-linked (GlcNAc...) asparagine glycan. Residues 934–956 form a helical membrane-spanning segment; sequence GLIVGVISISIILLLLLGVFLWL. At 957–1382 the chain is on the cytoplasmic side; it reads KKRKQIKDLG…QDNIDGEGDT (426 aa). S967 is subject to Phosphoserine. Phosphothreonine is present on T978. 3 positions are modified to phosphoserine: S991, S998, and S1001. Phosphotyrosine is present on Y1004. The Protein kinase domain maps to 1079–1346; sequence VHFNEVIGRG…RISAIFSTFI (268 aa). Residues 1085–1093 and K1111 each bind ATP; that span reads IGRGHFGCV. Residue D1205 is the Proton acceptor of the active site. Residues 1213–1382 are interaction with RANBP9; the sequence is LDEKFTVKVA…QDNIDGEGDT (170 aa). A Phosphotyrosine modification is found at Y1231. Residues Y1235 and Y1236 each carry the phosphotyrosine; by autocatalysis modification. T1290 carries the phosphothreonine modification. An interaction with MUC20 region spans residues 1321-1360; the sequence is WHPKAELRPSFSELVSRISAIFSTFIGEHYVHVNATYVNV. Phosphotyrosine; by autocatalysis is present on residues Y1350 and Y1357. Y1366 carries the phosphotyrosine modification.

Belongs to the protein kinase superfamily. Tyr protein kinase family. Heterodimer made of an alpha chain (50 kDa) and a beta chain (145 kDa) which are disulfide linked. Binds PLXNB1. Interacts when phosphorylated with downstream effectors including STAT3, PIK3R1, SRC, PCLG1, GRB2 and GAB1. Interacts with SPSB1, SPSB2 and SPSB4. Interacts with INPP5D/SHIP1. When phosphorylated at Tyr-1357, interacts with INPPL1/SHIP2. Interacts with RANBP9 and RANBP10, as well as SPSB1, SPSB2, SPSB3 and SPSB4. SPSB1 binding occurs in the presence and in the absence of HGF, however HGF treatment has a positive effect on this interaction. Interacts with MUC20; prevents interaction with GRB2 and suppresses hepatocyte growth factor-induced cell proliferation. Interacts with GRB10. Interacts with PTPN1 and PTPN2. Interacts with HSP90AA1 and HSP90AB1; the interaction suppresses MET kinase activity. Interacts with tensin TNS3. Interacts (when phosphorylated) with tensin TNS4 (via SH2 domain); the interaction increases MET protein stability by inhibiting MET endocytosis and subsequent lysosomal degradation. In terms of processing, autophosphorylated in response to ligand binding on Tyr-1235 and Tyr-1236 in the kinase domain leading to further phosphorylation of Tyr-1350 and Tyr-1357 in the C-terminal multifunctional docking site. Dephosphorylated by PTPRJ at Tyr-1350 and Tyr-1366. Dephosphorylated by PTPN1 and PTPN2. Post-translationally, ubiquitinated. Ubiquitination by CBL regulates the receptor stability and activity through proteasomal degradation. O-mannosylation of IPT/TIG domains by TMEM260 is required for protein maturation. O-mannosylated residues are composed of single mannose glycans that are not elongated or modified.

It localises to the membrane. The enzyme catalyses L-tyrosyl-[protein] + ATP = O-phospho-L-tyrosyl-[protein] + ADP + H(+). With respect to regulation, in its inactive state, the C-terminal tail interacts with the catalytic domain and inhibits the kinase activity. Upon ligand binding, the C-terminal tail is displaced and becomes phosphorylated, thus increasing the kinase activity. In terms of biological role, receptor tyrosine kinase that transduces signals from the extracellular matrix into the cytoplasm by binding to hepatocyte growth factor/HGF ligand. Regulates many physiological processes including proliferation, scattering, morphogenesis and survival. Ligand binding at the cell surface induces autophosphorylation of MET on its intracellular domain that provides docking sites for downstream signaling molecules. Following activation by ligand, interacts with the PI3-kinase subunit PIK3R1, PLCG1, SRC, GRB2, STAT3 or the adapter GAB1. Recruitment of these downstream effectors by MET leads to the activation of several signaling cascades including the RAS-ERK, PI3 kinase-AKT, or PLCgamma-PKC. The RAS-ERK activation is associated with the morphogenetic effects while PI3K/AKT coordinates prosurvival effects. During embryonic development, MET signaling plays a role in gastrulation, development and migration of muscles and neuronal precursors, angiogenesis and kidney formation. In adults, participates in wound healing as well as organ regeneration and tissue remodeling. Also promotes differentiation and proliferation of hematopoietic cells. This Felis catus (Cat) protein is Hepatocyte growth factor receptor (MET).